Consider the following 256-residue polypeptide: Probable ATP-dependent transporter slr0075 (256 aa).

Positions 6–250 (LSIKNLTASV…EEKGYDFLDE (245 aa)) constitute an ABC transporter domain. 38 to 45 (GRNGSGKS) serves as a coordination point for ATP.

The protein belongs to the ABC transporter superfamily. Ycf16 family.

The polypeptide is Probable ATP-dependent transporter slr0075 (Synechocystis sp. (strain ATCC 27184 / PCC 6803 / Kazusa)).